Here is a 280-residue protein sequence, read N- to C-terminus: 4-deoxy-L-threo-5-hexosulose-uronate ketol-isomerase (280 aa).

Residues His198, His200, Glu205, and His247 each coordinate Zn(2+).

Belongs to the KduI family. Requires Zn(2+) as cofactor.

It carries out the reaction 5-dehydro-4-deoxy-D-glucuronate = 3-deoxy-D-glycero-2,5-hexodiulosonate. It functions in the pathway glycan metabolism; pectin degradation; 2-dehydro-3-deoxy-D-gluconate from pectin: step 4/5. Its function is as follows. Catalyzes the isomerization of 5-dehydro-4-deoxy-D-glucuronate to 3-deoxy-D-glycero-2,5-hexodiulosonate. This is 4-deoxy-L-threo-5-hexosulose-uronate ketol-isomerase from Bacteroides fragilis (strain YCH46).